The sequence spans 266 residues: Glucosamine-6-phosphate deaminase (266 aa).

The active-site Proton acceptor; for enolization step is Asp-72. The For ring-opening step role is filled by Asp-141. The Proton acceptor; for ring-opening step role is filled by His-143. The For ring-opening step role is filled by Glu-148.

Belongs to the glucosamine/galactosamine-6-phosphate isomerase family. NagB subfamily. As to quaternary structure, homohexamer.

It catalyses the reaction alpha-D-glucosamine 6-phosphate + H2O = beta-D-fructose 6-phosphate + NH4(+). It participates in amino-sugar metabolism; N-acetylneuraminate degradation; D-fructose 6-phosphate from N-acetylneuraminate: step 5/5. With respect to regulation, allosterically activated by N-acetylglucosamine 6-phosphate (GlcNAc6P). Functionally, catalyzes the reversible isomerization-deamination of glucosamine 6-phosphate (GlcN6P) to form fructose 6-phosphate (Fru6P) and ammonium ion. The protein is Glucosamine-6-phosphate deaminase of Vibrio cholerae serotype O1 (strain ATCC 39541 / Classical Ogawa 395 / O395).